A 273-amino-acid polypeptide reads, in one-letter code: Nickel permease LarQ (273 aa).

Transmembrane regions (helical) follow at residues 64–84 (LIQL…ILLW), 117–137 (MLFV…FFGL), 159–179 (LAGL…AIAI), 210–230 (LIGA…LELY), and 251–271 (HWRD…FIFW).

It belongs to the CbiQ family. May form an energy-coupling factor (ECF) transporter complex composed of an ATP-binding protein (A component, LarO), a transmembrane protein (T component, LarQ) and a fused possible substrate-capture protein (S component, LarMN) of unknown stoichiometry.

It is found in the cell membrane. Functionally, probable transmembrane component of the energy-coupling factor (ECF) transporter complex LarMNQO involved in nickel import. This chain is Nickel permease LarQ, found in Lactiplantibacillus plantarum (strain ATCC BAA-793 / NCIMB 8826 / WCFS1) (Lactobacillus plantarum).